Consider the following 257-residue polypeptide: Type 2 phosphatidylinositol 4,5-bisphosphate 4-phosphatase (257 aa).

Over residues 1 to 10 (MAADGVDERS) the composition is skewed to basic and acidic residues. Residues 1-34 (MAADGVDERSPLLSASHSGSVTPTAPPYLQDSSP) form a disordered region. A compositionally biased stretch (polar residues) spans 13–23 (LSASHSGSVTP). Position 22 is a phosphothreonine (threonine 22). A Phosphoserine modification is found at serine 33. Residue cysteine 107 is part of the active site. The short motif at 107 to 113 (CKDTSRR) is the CX5R motif element. Helical transmembrane passes span 192 to 212 (CCAY…LTVG) and 227 to 247 (WAIA…WGAI).

Its subcellular location is the late endosome membrane. It is found in the lysosome membrane. It localises to the cytoplasmic vesicle. The protein localises to the phagosome membrane. The protein resides in the cell membrane. It catalyses the reaction a 1,2-diacyl-sn-glycero-3-phospho-(1D-myo-inositol-4,5-bisphosphate) + H2O = a 1,2-diacyl-sn-glycero-3-phospho-(1D-myo-inositol-5-phosphate) + phosphate. Its function is as follows. Catalyzes the hydrolysis of phosphatidylinositol-4,5-bisphosphate (PtdIns-4,5-P2) to phosphatidylinositol-4-phosphate (PtdIns-4-P). Does not hydrolyze phosphatidylinositol 3,4,5-trisphosphate, phosphatidylinositol 3,4-bisphosphate, inositol 3,5-bisphosphate, inositol 3,4-bisphosphate, phosphatidylinositol 5-monophosphate, phosphatidylinositol 4-monophosphate and phosphatidylinositol 3-monophosphate. Negatively regulates the phagocytosis of large particles by reducing phagosomal phosphatidylinositol 4,5-bisphosphate accumulation during cup formation. This is Type 2 phosphatidylinositol 4,5-bisphosphate 4-phosphatase from Bos taurus (Bovine).